The sequence spans 214 residues: Redox-sensing transcriptional repressor Rex (214 aa).

The segment at residues Leu-17–Phe-56 is a DNA-binding region (H-T-H motif). Residue Gly-91 to Gly-96 participates in NAD(+) binding.

It belongs to the transcriptional regulatory Rex family. As to quaternary structure, homodimer.

The protein localises to the cytoplasm. In terms of biological role, modulates transcription in response to changes in cellular NADH/NAD(+) redox state. This chain is Redox-sensing transcriptional repressor Rex, found in Streptococcus pyogenes serotype M4 (strain MGAS10750).